Consider the following 606-residue polypeptide: Threonine--tRNA ligase (606 aa).

Positions 212 to 503 are catalytic; the sequence is DHRKLGVEMK…LLEHTAGELP (292 aa). Residues Cys304, His355, and His480 each contribute to the Zn(2+) site.

The protein belongs to the class-II aminoacyl-tRNA synthetase family. Homodimer. Zn(2+) is required as a cofactor.

Its subcellular location is the cytoplasm. The enzyme catalyses tRNA(Thr) + L-threonine + ATP = L-threonyl-tRNA(Thr) + AMP + diphosphate + H(+). In terms of biological role, catalyzes the attachment of threonine to tRNA(Thr) in a two-step reaction: L-threonine is first activated by ATP to form Thr-AMP and then transferred to the acceptor end of tRNA(Thr). Also edits incorrectly charged L-seryl-tRNA(Thr). In Campylobacter concisus (strain 13826), this protein is Threonine--tRNA ligase.